A 434-amino-acid chain; its full sequence is Enolase (434 aa).

Gln-163 contributes to the (2R)-2-phosphoglycerate binding site. Catalysis depends on Glu-205, which acts as the Proton donor. Asp-242, Glu-291, and Asp-318 together coordinate Mg(2+). (2R)-2-phosphoglycerate is bound by residues Lys-343, Arg-372, Ser-373, and Lys-394. Lys-343 (proton acceptor) is an active-site residue.

It belongs to the enolase family. It depends on Mg(2+) as a cofactor.

It is found in the cytoplasm. The protein resides in the secreted. The protein localises to the cell surface. It catalyses the reaction (2R)-2-phosphoglycerate = phosphoenolpyruvate + H2O. It participates in carbohydrate degradation; glycolysis; pyruvate from D-glyceraldehyde 3-phosphate: step 4/5. Catalyzes the reversible conversion of 2-phosphoglycerate (2-PG) into phosphoenolpyruvate (PEP). It is essential for the degradation of carbohydrates via glycolysis. The protein is Enolase of Streptococcus pneumoniae serotype 19F (strain G54).